Here is a 224-residue protein sequence, read N- to C-terminus: MSIRDWPAAERPRERLLEQGSASLSDAELLAIFLRTGVPGKSAVDLARHLLNQFGSLRLLLEADQEAFSKQLGLGPAKFAQLQAAQEMSKRHLAERSRQKTALENPQVVRDYLKVMLRHEPHEVFGCLFLDSKHQVLTFEALFRGSIDNTAVHPREVVKRSLANNAAAVILCHNHPSGNSDPSQADRLLTKRLQKALELIDVRVLDHFIVGDGEPLSMAECGWM.

An MPN domain is found at 102 to 224 (ALENPQVVRD…PLSMAECGWM (123 aa)). Zn(2+) is bound by residues histidine 173, histidine 175, and aspartate 186. Residues 173–186 (HNHPSGNSDPSQAD) carry the JAMM motif motif.

It belongs to the UPF0758 family.

In Pseudomonas fluorescens (strain Pf0-1), this protein is UPF0758 protein Pfl01_5539.